A 102-amino-acid chain; its full sequence is NADH-quinone oxidoreductase subunit K (102 aa).

A run of 3 helical transmembrane segments spans residues 2–22 (LDFYILVALILFFIGVLGVIL), 26–46 (IFTIFMSVELMLNATALIFAT), and 58–78 (VIVMLIIAIAAAEASFGLALI).

It belongs to the complex I subunit 4L family. As to quaternary structure, NDH-1 is composed of 14 different subunits. Subunits NuoA, H, J, K, L, M, N constitute the membrane sector of the complex.

The protein resides in the cell inner membrane. The catalysed reaction is a quinone + NADH + 5 H(+)(in) = a quinol + NAD(+) + 4 H(+)(out). NDH-1 shuttles electrons from NADH, via FMN and iron-sulfur (Fe-S) centers, to quinones in the respiratory chain. The immediate electron acceptor for the enzyme in this species is believed to be ubiquinone. Couples the redox reaction to proton translocation (for every two electrons transferred, four hydrogen ions are translocated across the cytoplasmic membrane), and thus conserves the redox energy in a proton gradient. This Campylobacter fetus subsp. fetus (strain 82-40) protein is NADH-quinone oxidoreductase subunit K.